Reading from the N-terminus, the 265-residue chain is NAD kinase 1 (265 aa).

Aspartate 45 functions as the Proton acceptor in the catalytic mechanism. NAD(+) contacts are provided by residues 45–46 (DG), 122–123 (NE), arginine 148, aspartate 150, and alanine 185.

It belongs to the NAD kinase family. It depends on a divalent metal cation as a cofactor.

It is found in the cytoplasm. It catalyses the reaction NAD(+) + ATP = ADP + NADP(+) + H(+). In terms of biological role, involved in the regulation of the intracellular balance of NAD and NADP, and is a key enzyme in the biosynthesis of NADP. Catalyzes specifically the phosphorylation on 2'-hydroxyl of the adenosine moiety of NAD to yield NADP. This chain is NAD kinase 1, found in Bacillus anthracis.